A 90-amino-acid chain; its full sequence is uncharacterized protein (90 aa).

Its subcellular location is the cytoplasm. This is an uncharacterized protein from Saccharomyces cerevisiae (strain ATCC 204508 / S288c) (Baker's yeast).